The chain runs to 578 residues: Acyl-coenzyme A synthetase ACSM5, mitochondrial (578 aa).

A mitochondrion-targeting transit peptide spans 1–22; sequence MRLWLRGLACQALRSSWGVCRI. An N6-acetyllysine; alternate modification is found at Lys96. At Lys96 the chain carries N6-succinyllysine; alternate. Residue Lys151 is modified to N6-acetyllysine. 229–237 lines the ATP pocket; the sequence is TSGTTGAPK. Lys302 carries the post-translational modification N6-acetyllysine; alternate. Lys302 bears the N6-succinyllysine; alternate mark. At Lys335 the chain carries N6-acetyllysine. Residues 367 to 372, Asp454, Arg469, and Lys565 each bind ATP; that span reads EGYGQS.

It belongs to the ATP-dependent AMP-binding enzyme family. Mg(2+) serves as cofactor. It depends on Mn(2+) as a cofactor.

It is found in the mitochondrion matrix. The enzyme catalyses a medium-chain fatty acid + ATP + CoA = a medium-chain fatty acyl-CoA + AMP + diphosphate. Its function is as follows. Catalyzes the activation of fatty acids by CoA to produce an acyl-CoA, the first step in fatty acid metabolism. The chain is Acyl-coenzyme A synthetase ACSM5, mitochondrial (Acsm5) from Mus musculus (Mouse).